Reading from the N-terminus, the 149-residue chain is Thioredoxin-like protein 4B (149 aa).

Belongs to the DIM1 family. In terms of assembly, homodimer. Interacts with the U5-102 kDa protein subunit of the spliceosome.

It is found in the nucleus. Its function is as follows. Essential role in pre-mRNA splicing. Required in cell cycle progression for S/G(2) transition. The sequence is that of Thioredoxin-like protein 4B (Txnl4b) from Mus musculus (Mouse).